The sequence spans 495 residues: UDP-glycosyltransferase 1 (495 aa).

The Proton acceptor role is filled by His24. Position 24 (His24) interacts with an anthocyanidin. Asp129 acts as the Charge relay in catalysis. Residues Gln358, His373, Trp376, Asn377, Ser378, and Glu381 each contribute to the UDP-alpha-D-glucose site. Gly396 provides a ligand contact to an anthocyanidin. The UDP-alpha-D-glucose site is built by Asp397 and Gln398.

Belongs to the UDP-glycosyltransferase family.

It catalyses the reaction oleanolate + UDP-alpha-D-glucose = oleanolate 3-O-beta-D-glucoside + UDP + H(+). Catalyzes the transfer of a glucose (Glc) moiety from UDP-Glc to the C-3 position of the oleanane sapogenins oleanolate and hederagenin. The monoglucosylated hederagenin 3-O-beta-D-glucoside is a feeding deterrent of the yellow-striped flea beetle (Phyllotreta nemorum). The chain is UDP-glycosyltransferase 1 from Barbarea vulgaris (Yellow rocket).